Consider the following 721-residue polypeptide: Translation initiation factor eIF2B subunit epsilon (721 aa).

Positions 1-40 (MATTVVAPPGAVSDRANKRGGGPGGGGGGGGARGAEEESP) are disordered. Ala2 is subject to N-acetylalanine. Arg19 bears the Omega-N-methylarginine mark. The span at 19–33 (RGGGPGGGGGGGGAR) shows a compositional bias: gly residues. Residues Lys61 and Lys103 each participate in a glycyl lysine isopeptide (Lys-Gly) (interchain with G-Cter in ubiquitin) cross-link. At Ser130 the chain carries Phosphoserine. Glycyl lysine isopeptide (Lys-Gly) (interchain with G-Cter in ubiquitin) cross-links involve residues Lys141 and Lys217. Thr322 carries the phosphothreonine modification. Disordered regions lie at residues 446-478 (GSVISLHPPDAEEDEDDGQFSDDSGVNQAKEKA) and 517-545 (LTINEEEESETESERSMDSEELDSRAGSP). Ser450 is subject to Phosphoserine. A compositionally biased stretch (acidic residues) spans 456-465 (AEEDEDDGQF). Phosphoserine is present on residues Ser466, Ser469, Ser532, and Ser540. Residues 528-540 (ESERSMDSEELDS) show a composition bias toward basic and acidic residues. The region spanning 543–720 (GSPQLDDIKV…KEAEEESSED (178 aa)) is the W2 domain. At Ser544 the chain carries Phosphoserine; by DYRK2. At Ser717 the chain carries Phosphoserine.

This sequence belongs to the eIF-2B gamma/epsilon subunits family. Component of the translation initiation factor 2B (eIF2B) complex which is a heterodecamer of two sets of five different subunits: alpha, beta, gamma, delta and epsilon. Subunits alpha, beta and delta comprise a regulatory subcomplex and subunits epsilon and gamma comprise a catalytic subcomplex. Within the complex, the hexameric regulatory complex resides at the center, with the two heterodimeric catalytic subcomplexes bound on opposite sides. Post-translationally, phosphorylated at Ser-544 by DYRK2; this is required for subsequent phosphorylation by GSK3B. Phosphorylated on serine and threonine residues by GSK3B; phosphorylation inhibits its function. Polyubiquitinated, probably by NEDD4. Ubiquitously expressed.

The protein resides in the cytoplasm. The protein localises to the cytosol. With respect to regulation, activated by the chemical integrated stress response (ISR) inhibitor ISRIB which stimulates guanine nucleotide exchange factor activity for both phosphorylated and unphosphorylated eIF2. Its function is as follows. Acts as a component of the translation initiation factor 2B (eIF2B) complex, which catalyzes the exchange of GDP for GTP on eukaryotic initiation factor 2 (eIF2) gamma subunit. Its guanine nucleotide exchange factor activity is repressed when bound to eIF2 complex phosphorylated on the alpha subunit, thereby limiting the amount of methionyl-initiator methionine tRNA available to the ribosome and consequently global translation is repressed. The chain is Translation initiation factor eIF2B subunit epsilon (EIF2B5) from Oryctolagus cuniculus (Rabbit).